We begin with the raw amino-acid sequence, 22 residues long: thr operon leader peptide (22 aa).

Residues 1 to 22 (MRNISLTTTIITTTDTTGNGAG) form a disordered region. The span at 7 to 22 (TTTIITTTDTTGNGAG) shows a compositional bias: low complexity.

This sequence belongs to the thr operon leader peptide family.

Functionally, this protein is involved in control of the biosynthesis of threonine. The sequence is that of thr operon leader peptide from Serratia marcescens.